The primary structure comprises 727 residues: Zinc metalloproteinase nas-38 (727 aa).

A signal peptide spans 1 to 25; that stretch reads MPSPSYNRHIIIASCFCCLLIFSSA. The propeptide occupies 26–114; sequence ARVPKASKKH…FTQGKREKRK (89 aa). The Peptidase M12A domain maps to 113–312; sequence RKIGRNPLYK…QAINMAYGCT (200 aa). Cystine bridges form between Cys158–Cys311 and Cys179–Cys199. His207 lines the Zn(2+) pocket. The active site involves Glu208. 2 residues coordinate Zn(2+): His211 and His217. The EGF-like domain occupies 306 to 345; the sequence is NMAYGCTESCADLPCLRNGYTHPNNCSMCACPEGLSGRYC. The N-linked (GlcNAc...) asparagine glycan is linked to Asn330. The CUB domain maps to 353 to 469; sequence AQCGGVIFAT…AGFKAKFWSN (117 aa). 2 cysteine pairs are disulfide-bonded: Cys355–Cys383 and Cys411–Cys432. Disordered regions lie at residues 473-506 and 532-561; these read PEGV…QSTT and TPLT…TEPS. Low complexity predominate over residues 535–554; sequence TSSSTTTESTTVSSTTQSTT. The TSP type-1 domain maps to 610 to 658; it reads ECGCGAWSEWQGECSQQCGGCGHRLRKRECKKEACRKEEKRPCNFSACP. Disulfide bonds link Cys611-Cys644, Cys623-Cys652, Cys627-Cys657, and Cys639-Cys644. N-linked (GlcNAc...) asparagine glycosylation is found at Asn653 and Asn714.

The cofactor is Zn(2+). Expressed in the epidermis, the excretory canal cell, duct cell, pore cell, and excretory gland cell. Expressed in an oscillating pattern in epithelial cells with increased expression during the lethargus phase which occurs during molting between larval and adult stages. Not expressed in seam cells or in the RIS neuron.

The protein localises to the secreted. Metalloprotease. As part of the innate immune response to molting and injury to the adult epidermis, positively regulates the activity of the transcription factor sta-2 to promote the expression of epidermal antimicrobial peptides such as nlp-29. Through regulating the expression of epidermal antimicrobial peptides such as nlp-29, modulates sleep duration and locomotion quiescence during the sleep-like state called lethargus which occurs during molting between larval and adult stages. This may occur through the sleep-active RIS neuron. This Caenorhabditis elegans protein is Zinc metalloproteinase nas-38.